A 178-amino-acid chain; its full sequence is Large ribosomal subunit protein uL6 (178 aa).

This sequence belongs to the universal ribosomal protein uL6 family. Part of the 50S ribosomal subunit.

This protein binds to the 23S rRNA, and is important in its secondary structure. It is located near the subunit interface in the base of the L7/L12 stalk, and near the tRNA binding site of the peptidyltransferase center. In Thermoplasma acidophilum (strain ATCC 25905 / DSM 1728 / JCM 9062 / NBRC 15155 / AMRC-C165), this protein is Large ribosomal subunit protein uL6.